A 164-amino-acid polypeptide reads, in one-letter code: Peptide deformylase (164 aa).

Cys-87 and His-129 together coordinate Fe cation. The active site involves Glu-130. His-133 contributes to the Fe cation binding site.

This sequence belongs to the polypeptide deformylase family. Requires Fe(2+) as cofactor.

The enzyme catalyses N-terminal N-formyl-L-methionyl-[peptide] + H2O = N-terminal L-methionyl-[peptide] + formate. Its function is as follows. Removes the formyl group from the N-terminal Met of newly synthesized proteins. Requires at least a dipeptide for an efficient rate of reaction. N-terminal L-methionine is a prerequisite for activity but the enzyme has broad specificity at other positions. This Thermotoga sp. (strain RQ2) protein is Peptide deformylase.